The primary structure comprises 307 residues: Dihydroorotate dehydrogenase B (NAD(+)), catalytic subunit (307 aa).

FMN is bound by residues serine 21 and lysine 45–alanine 46. Substrate contacts are provided by residues lysine 45 and asparagine 69 to leucine 73. Positions 101 and 129 each coordinate FMN. Residue asparagine 129 participates in substrate binding. Residue cysteine 132 is the Nucleophile of the active site. FMN contacts are provided by lysine 167 and isoleucine 193. Asparagine 194–threonine 195 provides a ligand contact to substrate. Residues glycine 219, glycine 245–glycine 246, and glycine 267–threonine 268 contribute to the FMN site.

This sequence belongs to the dihydroorotate dehydrogenase family. Type 1 subfamily. As to quaternary structure, heterotetramer of 2 PyrK and 2 PyrD type B subunits. FMN is required as a cofactor.

The protein resides in the cytoplasm. The catalysed reaction is (S)-dihydroorotate + NAD(+) = orotate + NADH + H(+). It functions in the pathway pyrimidine metabolism; UMP biosynthesis via de novo pathway; orotate from (S)-dihydroorotate (NAD(+) route): step 1/1. In terms of biological role, catalyzes the conversion of dihydroorotate to orotate with NAD(+) as electron acceptor. In Cutibacterium acnes (strain DSM 16379 / KPA171202) (Propionibacterium acnes), this protein is Dihydroorotate dehydrogenase B (NAD(+)), catalytic subunit (pyrD).